The primary structure comprises 359 residues: Peptide chain release factor 1 (359 aa).

Residue Q235 is modified to N5-methylglutamine. Positions 287-312 are disordered; it reads AQEASAMRSAQVGSGDRSERIRTYNF.

The protein belongs to the prokaryotic/mitochondrial release factor family. In terms of processing, methylated by PrmC. Methylation increases the termination efficiency of RF1.

It is found in the cytoplasm. In terms of biological role, peptide chain release factor 1 directs the termination of translation in response to the peptide chain termination codons UAG and UAA. This is Peptide chain release factor 1 from Chlamydia trachomatis serovar A (strain ATCC VR-571B / DSM 19440 / HAR-13).